The following is a 102-amino-acid chain: Transposable element activator uncharacterized 12 kDa protein (102 aa).

A compositionally biased stretch (basic residues) spans 24 to 51 (HNHNQNHNHSHNLNPKKKHHRRGQRSAH). Residues 24–55 (HNHNQNHNHSHNLNPKKKHHRRGQRSAHRMYG) are disordered.

The chain is Transposable element activator uncharacterized 12 kDa protein from Zea mays (Maize).